The primary structure comprises 306 residues: UDP-3-O-acyl-N-acetylglucosamine deacetylase (306 aa).

Zn(2+) contacts are provided by His-79, His-238, and Asp-242. His-265 acts as the Proton donor in catalysis.

This sequence belongs to the LpxC family. It depends on Zn(2+) as a cofactor.

It carries out the reaction a UDP-3-O-[(3R)-3-hydroxyacyl]-N-acetyl-alpha-D-glucosamine + H2O = a UDP-3-O-[(3R)-3-hydroxyacyl]-alpha-D-glucosamine + acetate. It functions in the pathway glycolipid biosynthesis; lipid IV(A) biosynthesis; lipid IV(A) from (3R)-3-hydroxytetradecanoyl-[acyl-carrier-protein] and UDP-N-acetyl-alpha-D-glucosamine: step 2/6. Its function is as follows. Catalyzes the hydrolysis of UDP-3-O-myristoyl-N-acetylglucosamine to form UDP-3-O-myristoylglucosamine and acetate, the committed step in lipid A biosynthesis. The sequence is that of UDP-3-O-acyl-N-acetylglucosamine deacetylase from Shewanella denitrificans (strain OS217 / ATCC BAA-1090 / DSM 15013).